Consider the following 206-residue polypeptide: Protein Nef (206 aa).

The N-myristoyl glycine; by host moiety is linked to residue G2. A Phosphoserine; by host modification is found at S6. An acidic; interacts with host PACS1 and PACS2; stabilizes the interaction of NEF/MHC-I with host AP1M1; necessary for MHC-I internalization region spans residues 62-66 (EDGEE). An SH3-binding; interaction with Src family tyrosine kinases region spans residues 70–79 (PVRPQVPLRP). Positions 73–76 (PQVP) match the PxxP; stabilizes the interaction of NEF/MHC-I with host AP1M1; necessary for MHC-I internalization motif. Residues 109 to 125 (DILDLWVYNTQGYFPDW) are mediates dimerization, Nef-PTE1 interaction. The binding to ATP6V1H stretch occupies residues 149 to 181 (VNPQEVEQANEGENNSLLHPMSLHGMEDDGREV). A Dileucine internalization motif; necessary for CD4 internalization motif is present at residues 165 to 166 (LL). The Diacidic; necessary for CD4 internalization signature appears at 175–176 (ED).

Belongs to the lentivirus primate group Nef protein family. In terms of assembly, monomer; cytosolic form. Homodimer; membrane bound form. Interacts with Nef associated p21-activated kinase (PAK2); this interaction activates PAK2. Associates with the Nef-MHC-I-AP1 complex; this complex is required for MHC-I internalization. Interacts (via C-terminus) with host PI3-kinase. Interacts with host PACS1; this interaction seems to be weak. Interacts with host PACS2. Interacts with host LCK and MAPK3; these interactions inhibit the kinase activity of the latter. Interacts with host ATP6V1H; this interaction may play a role in CD4 endocytosis. Associates with the CD4-Nef-AP2 complex; this complex is required for CD4 internalization. Interacts with host AP2 subunit alpha and AP2 subunit sigma2. Interacts with TCR-zeta chain; this interaction up-regulates the Fas ligand (FasL) surface expression. Interacts with host HCK, LYN, and SRC; these interactions activate the Src family kinases. Interacts with MAP3K5; this interaction inhibits the Fas and TNFR-mediated death signals. Interacts with beta-COP and PTE1. Interacts with human RACK1; this increases Nef phosphorylation by PKC. Interacts with TP53; this interaction decreases the half-life of TP53, protecting the infected cell against p53-mediated apoptosis. In terms of processing, the virion-associated Nef proteins are cleaved by the viral protease to release the soluble C-terminal core protein. Nef is probably cleaved concomitantly with viral structural proteins on maturation of virus particles. Myristoylated. Post-translationally, phosphorylated on serine residues, probably by host PKCdelta and theta.

Its subcellular location is the host cell membrane. The protein localises to the virion. It is found in the secreted. It localises to the host Golgi apparatus membrane. Factor of infectivity and pathogenicity, required for optimal virus replication. Alters numerous pathways of T-lymphocyte function and down-regulates immunity surface molecules in order to evade host defense and increase viral infectivity. Alters the functionality of other immunity cells, like dendritic cells, monocytes/macrophages and NK cells. In terms of biological role, in infected CD4(+) T-lymphocytes, down-regulates the surface MHC-I, mature MHC-II, CD4, CD28, CCR5 and CXCR4 molecules. Mediates internalization and degradation of host CD4 through the interaction of with the cytoplasmic tail of CD4, the recruitment of AP-2 (clathrin adapter protein complex 2), internalization through clathrin coated pits, and subsequent transport to endosomes and lysosomes for degradation. Diverts host MHC-I molecules to the trans-Golgi network-associated endosomal compartments by an endocytic pathway to finally target them for degradation. MHC-I down-regulation may involve AP-1 (clathrin adapter protein complex 1) or possibly Src family kinase-ZAP70/Syk-PI3K cascade recruited by PACS2. In consequence infected cells are masked for immune recognition by cytotoxic T-lymphocytes. Decreasing the number of immune receptors also prevents reinfection by more HIV particles (superinfection). Down-regulates host SERINC3 and SERINC5 thereby excluding these proteins from the viral particles. Virion infectivity is drastically higher when SERINC3 or SERINC5 are excluded from the viral envelope, because these host antiviral proteins impair the membrane fusion event necessary for subsequent virion penetration. Functionally, bypasses host T-cell signaling by inducing a transcriptional program nearly identical to that of anti-CD3 cell activation. Interaction with TCR-zeta chain up-regulates the Fas ligand (FasL). Increasing surface FasL molecules and decreasing surface MHC-I molecules on infected CD4(+) cells send attacking cytotoxic CD8+ T-lymphocytes into apoptosis. Its function is as follows. Plays a role in optimizing the host cell environment for viral replication without causing cell death by apoptosis. Protects the infected cells from apoptosis in order to keep them alive until the next virus generation is ready to strike. Inhibits the Fas and TNFR-mediated death signals by blocking MAP3K5/ASK1. Decreases the half-life of TP53, protecting the infected cell against p53-mediated apoptosis. Inhibits the apoptotic signals regulated by the Bcl-2 family proteins through the formation of a Nef/PI3-kinase/PAK2 complex that leads to activation of PAK2 and induces phosphorylation of host BAD. Extracellular Nef protein targets CD4(+) T-lymphocytes for apoptosis by interacting with CXCR4 surface receptors. The protein is Protein Nef of Homo sapiens (Human).